Here is a 390-residue protein sequence, read N- to C-terminus: uncharacterized protein (390 aa).

The Glutaredoxin domain occupies 215–325; that stretch reads SRFKRKTLGK…KLIKDCEMVE (111 aa).

This is an uncharacterized protein from Arabidopsis thaliana (Mouse-ear cress).